Reading from the N-terminus, the 430-residue chain is Tol-Pal system protein TolB (430 aa).

The signal sequence occupies residues 1–21 (MKQALRVAFGFLMLWAAMLHA).

It belongs to the TolB family. As to quaternary structure, the Tol-Pal system is composed of five core proteins: the inner membrane proteins TolA, TolQ and TolR, the periplasmic protein TolB and the outer membrane protein Pal. They form a network linking the inner and outer membranes and the peptidoglycan layer.

The protein localises to the periplasm. Part of the Tol-Pal system, which plays a role in outer membrane invagination during cell division and is important for maintaining outer membrane integrity. TolB occupies a key intermediary position in the Tol-Pal system because it communicates directly with both membrane-embedded components, Pal in the outer membrane and TolA in the inner membrane. The protein is Tol-Pal system protein TolB of Escherichia fergusonii (strain ATCC 35469 / DSM 13698 / CCUG 18766 / IAM 14443 / JCM 21226 / LMG 7866 / NBRC 102419 / NCTC 12128 / CDC 0568-73).